The sequence spans 114 residues: Kita-kyushu lung cancer antigen 1 homolog (114 aa).

Topologically, residues 1–4 (MNVY) are cytoplasmic. Residues 5 to 22 (LLLASGILCALMTVFWKY) form a helical; Signal-anchor for type II membrane protein membrane-spanning segment. Residues 23–114 (RRFQRNTGEM…RSASAHRKST (92 aa)) are Extracellular-facing. Asn84 is a glycosylation site (N-linked (GlcNAc...) asparagine).

The protein resides in the cell membrane. This chain is Kita-kyushu lung cancer antigen 1 homolog (CT83), found in Macaca fascicularis (Crab-eating macaque).